The chain runs to 176 residues: Cytochrome c oxidase subunit 4 isoform 2, mitochondrial (176 aa).

Residues Met1–Met28 constitute a mitochondrion transit peptide. Residues Ala29 to Ser106 lie on the Mitochondrial matrix side of the membrane. The helical transmembrane segment at Glu107–Tyr132 threads the bilayer. Topologically, residues Val133–Lys176 are mitochondrial intermembrane.

Belongs to the cytochrome c oxidase IV family. Component of the cytochrome c oxidase (complex IV, CIV), a multisubunit enzyme composed of 14 subunits. The complex is composed of a catalytic core of 3 subunits MT-CO1, MT-CO2 and MT-CO3, encoded in the mitochondrial DNA, and 11 supernumerary subunits COX4I, COX5A, COX5B, COX6A, COX6B, COX6C, COX7A, COX7B, COX7C, COX8 and NDUFA4, which are encoded in the nuclear genome. The complex exists as a monomer or a dimer and forms supercomplexes (SCs) in the inner mitochondrial membrane with NADH-ubiquinone oxidoreductase (complex I, CI) and ubiquinol-cytochrome c oxidoreductase (cytochrome b-c1 complex, complex III, CIII), resulting in different assemblies (supercomplex SCI(1)III(2)IV(1) and megacomplex MCI(2)III(2)IV(2)).

The protein localises to the mitochondrion inner membrane. It functions in the pathway energy metabolism; oxidative phosphorylation. Functionally, component of the cytochrome c oxidase, the last enzyme in the mitochondrial electron transport chain which drives oxidative phosphorylation. The respiratory chain contains 3 multisubunit complexes succinate dehydrogenase (complex II, CII), ubiquinol-cytochrome c oxidoreductase (cytochrome b-c1 complex, complex III, CIII) and cytochrome c oxidase (complex IV, CIV), that cooperate to transfer electrons derived from NADH and succinate to molecular oxygen, creating an electrochemical gradient over the inner membrane that drives transmembrane transport and the ATP synthase. Cytochrome c oxidase is the component of the respiratory chain that catalyzes the reduction of oxygen to water. Electrons originating from reduced cytochrome c in the intermembrane space (IMS) are transferred via the dinuclear copper A center (CU(A)) of subunit 2 and heme A of subunit 1 to the active site in subunit 1, a binuclear center (BNC) formed by heme A3 and copper B (CU(B)). The BNC reduces molecular oxygen to 2 water molecules using 4 electrons from cytochrome c in the IMS and 4 protons from the mitochondrial matrix. The protein is Cytochrome c oxidase subunit 4 isoform 2, mitochondrial of Thunnus obesus (Bigeye tuna).